The following is a 366-amino-acid chain: tRNA(Met) cytidine acetate ligase (366 aa).

ATP-binding positions include 7 to 20 (IAEF…HQYL), Gly96, Asn152, and Arg175.

This sequence belongs to the TmcAL family.

It localises to the cytoplasm. It catalyses the reaction cytidine(34) in elongator tRNA(Met) + acetate + ATP = N(4)-acetylcytidine(34) in elongator tRNA(Met) + AMP + diphosphate. Functionally, catalyzes the formation of N(4)-acetylcytidine (ac(4)C) at the wobble position of elongator tRNA(Met), using acetate and ATP as substrates. First activates an acetate ion to form acetyladenylate (Ac-AMP) and then transfers the acetyl group to tRNA to form ac(4)C34. This chain is tRNA(Met) cytidine acetate ligase, found in Streptococcus equi subsp. zooepidemicus (strain H70).